The sequence spans 629 residues: DNA-directed RNA polymerase subunit beta' (629 aa).

The Zn(2+) site is built by C70, C72, C85, and C88. Mg(2+)-binding residues include D472, D474, and D476.

This sequence belongs to the RNA polymerase beta' chain family. RpoC1 subfamily. As to quaternary structure, in plastids the minimal PEP RNA polymerase catalytic core is composed of four subunits: alpha, beta, beta', and beta''. When a (nuclear-encoded) sigma factor is associated with the core the holoenzyme is formed, which can initiate transcription. Mg(2+) is required as a cofactor. The cofactor is Zn(2+).

The protein resides in the plastid. The protein localises to the chloroplast. It catalyses the reaction RNA(n) + a ribonucleoside 5'-triphosphate = RNA(n+1) + diphosphate. In terms of biological role, DNA-dependent RNA polymerase catalyzes the transcription of DNA into RNA using the four ribonucleoside triphosphates as substrates. This is DNA-directed RNA polymerase subunit beta' from Pyropia yezoensis (Susabi-nori).